A 245-amino-acid chain; its full sequence is MIIPALDLIDGTVVRLHQGDYGKQRDYGNDPLPRLQDYAAQGAEVLHLVDLTGAKDPAKRQIPLIKTLVAGVNVPVQVGGGVRSEEDVATLLEAGVARVVVGSTAVKSPEMVKGWFERFGADALVLALDVRIDEQGNKQVAVSGWQENSGVSLEQLVETYLPVGLKHVLCTDISRDGTLAGSNVSLYEEVCARYPQVAFQSSGGIGDINDVAALRGTGVRGVIVGRALLEGKFTVKEAIACWQNA.

The active-site Proton acceptor is the D7. D129 serves as the catalytic Proton donor.

It belongs to the HisA/HisF family.

Its subcellular location is the cytoplasm. It carries out the reaction 1-(5-phospho-beta-D-ribosyl)-5-[(5-phospho-beta-D-ribosylamino)methylideneamino]imidazole-4-carboxamide = 5-[(5-phospho-1-deoxy-D-ribulos-1-ylimino)methylamino]-1-(5-phospho-beta-D-ribosyl)imidazole-4-carboxamide. The protein operates within amino-acid biosynthesis; L-histidine biosynthesis; L-histidine from 5-phospho-alpha-D-ribose 1-diphosphate: step 4/9. This is 1-(5-phosphoribosyl)-5-[(5-phosphoribosylamino)methylideneamino] imidazole-4-carboxamide isomerase from Escherichia coli O127:H6 (strain E2348/69 / EPEC).